We begin with the raw amino-acid sequence, 334 residues long: Malate dehydrogenase, cytoplasmic (334 aa).

N-acetylserine is present on serine 2. NAD(+)-binding positions include glycine 11–alanine 17 and aspartate 42. Residues arginine 92 and arginine 98 each coordinate substrate. Asparagine 105 is an NAD(+) binding site. Lysine 110 is subject to N6-succinyllysine. Glutamine 112 provides a ligand contact to NAD(+). Residues lysine 118 and lysine 121 each carry the N6-acetyllysine modification. Valine 129–asparagine 131 is an NAD(+) binding site. Residues asparagine 131 and arginine 162 each coordinate substrate. Histidine 187 functions as the Proton acceptor in the catalytic mechanism. At lysine 214 the chain carries N6-succinyllysine. Serine 217 bears the Phosphoserine mark. The residue at position 230 (arginine 230) is an Omega-N-methylarginine. The residue at position 241 (serine 241) is a Phosphoserine. At lysine 298 the chain carries N6-acetyllysine; alternate. N6-succinyllysine; alternate is present on lysine 298. Serine 309 carries the phosphoserine modification. N6-succinyllysine is present on lysine 318. Serine 333 carries the post-translational modification Phosphoserine.

Belongs to the LDH/MDH superfamily. MDH type 2 family. In terms of assembly, homodimer. In terms of processing, ISGylated. Post-translationally, acetylation at Lys-118 dramatically enhances enzymatic activity and promotes adipogenic differentiation.

The protein resides in the cytoplasm. It localises to the cytosol. The enzyme catalyses (S)-malate + NAD(+) = oxaloacetate + NADH + H(+). It carries out the reaction (2R)-2-hydroxy-3-(4-hydroxyphenyl)propanoate + NAD(+) = 3-(4-hydroxyphenyl)pyruvate + NADH + H(+). It catalyses the reaction (S)-2-hydroxyglutarate + NAD(+) = 2-oxoglutarate + NADH + H(+). Its function is as follows. Catalyzes the reduction of aromatic alpha-keto acids in the presence of NADH. Plays essential roles in the malate-aspartate shuttle and the tricarboxylic acid cycle, important in mitochondrial NADH supply for oxidative phosphorylation. Catalyzes the reduction of 2-oxoglutarate to 2-hydroxyglutarate, leading to elevated reactive oxygen species (ROS). This is Malate dehydrogenase, cytoplasmic (MDH1) from Bos taurus (Bovine).